Here is a 230-residue protein sequence, read N- to C-terminus: DNA ADP-ribosyl transferase (230 aa).

The DarT domain occupies 26–230 (WIVWHFTHAD…KYVIKPGMYY (205 aa)). NAD(+) contacts are provided by residues 30 to 32 (HFT), Gly-39, Leu-47, and Arg-67. Arg-67 acts as the Proton acceptor in catalysis. Glu-183 is a catalytic residue.

The protein belongs to the DarT ADP-ribosyltransferase family. As to quaternary structure, interacts with cognate antitoxin DarG (via C-terminus); this heterodimeric complex neutralizes the toxic effect of DarT by preventing ssDNA binding to DarT and consequently inactivating the toxin by direct protein-protein interactions.

It catalyses the reaction a thymidine in DNA + NAD(+) = an N-(ADP-alpha-D-ribosyl)-thymidine in DNA + nicotinamide + H(+). In terms of biological role, toxic component of the hybrid type II/IV toxin-antitoxin (TA) system DarTG, which plays a crucial role in controlling bacterial growth and bacteriophage infection. ADP-ribosylates ssDNA, preferentially in the motif TTTW. In case of phage infection, DarT toxin ADP-ribosylates DNA, which inhibits both viral DNA and RNA synthesis and leads to abortive infection. Its toxic effect is neutralized by cognate antitoxin DarG. This Mycobacterium bovis (strain BCG / Pasteur 1173P2) protein is DNA ADP-ribosyl transferase.